Here is a 224-residue protein sequence, read N- to C-terminus: PKHD-type hydroxylase Shewana3_0717 (224 aa).

The Fe2OG dioxygenase domain occupies 78 to 176; sequence QFYPPLFNRY…RTAAFMWLQS (99 aa). Residues H96, D98, and H157 each contribute to the Fe cation site. A 2-oxoglutarate-binding site is contributed by R167.

Requires Fe(2+) as cofactor. The cofactor is L-ascorbate.

The sequence is that of PKHD-type hydroxylase Shewana3_0717 from Shewanella sp. (strain ANA-3).